The primary structure comprises 135 residues: Large ribosomal subunit protein mL41 (135 aa).

Residues 1-13 (MGVLSALARGFVR) constitute a mitochondrion transit peptide.

Belongs to the mitochondrion-specific ribosomal protein mL41 family. In terms of assembly, component of the mitochondrial ribosome large subunit (39S) which comprises a 16S rRNA and about 50 distinct proteins.

The protein resides in the mitochondrion. Component of the mitochondrial ribosome large subunit. Also involved in apoptosis and cell cycle. The sequence is that of Large ribosomal subunit protein mL41 (mrpl41) from Danio rerio (Zebrafish).